A 351-amino-acid polypeptide reads, in one-letter code: D-alanine--D-alanine ligase (351 aa).

The ATP-grasp domain maps to 146–340; sequence KEIMLYNNIK…YEDLCESIVL (195 aa). 173 to 226 lines the ATP pocket; the sequence is AFDYPMVVKPNSGGSSIGTRIVHDEAELAESLKDAYRFDDEIIVEEFITGREFS. The Mg(2+) site is built by aspartate 295, glutamate 307, and asparagine 309.

The protein belongs to the D-alanine--D-alanine ligase family. It depends on Mg(2+) as a cofactor. Requires Mn(2+) as cofactor.

It is found in the cytoplasm. It carries out the reaction 2 D-alanine + ATP = D-alanyl-D-alanine + ADP + phosphate + H(+). It participates in cell wall biogenesis; peptidoglycan biosynthesis. Functionally, cell wall formation. The protein is D-alanine--D-alanine ligase of Pediococcus pentosaceus (strain ATCC 25745 / CCUG 21536 / LMG 10740 / 183-1w).